The sequence spans 142 residues: 3-hydroxyacyl-[acyl-carrier-protein] dehydratase FabZ (142 aa).

His-49 is an active-site residue.

Belongs to the thioester dehydratase family. FabZ subfamily.

Its subcellular location is the cytoplasm. The catalysed reaction is a (3R)-hydroxyacyl-[ACP] = a (2E)-enoyl-[ACP] + H2O. Its function is as follows. Involved in unsaturated fatty acids biosynthesis. Catalyzes the dehydration of short chain beta-hydroxyacyl-ACPs and long chain saturated and unsaturated beta-hydroxyacyl-ACPs. In Deinococcus geothermalis (strain DSM 11300 / CIP 105573 / AG-3a), this protein is 3-hydroxyacyl-[acyl-carrier-protein] dehydratase FabZ.